We begin with the raw amino-acid sequence, 177 residues long: KxDL motif-containing protein 1 (177 aa).

At M1 the chain carries N-acetylmethionine. The segment at S100–E177 is disordered. Polar residues predominate over residues A125–L145.

It belongs to the KXD1 family. As to quaternary structure, component of the BLOC-one-related complex (BORC) which is composed of BLOC1S1, BLOC1S2, BORCS5, BORCS6, BORCS7, BORCS8, KXD1 and SNAPIN. Associates with the BLOC-1 complex. Interacts with BLOC1S1. Interacts with DTNBP1/BLOC1S7 (via coiled-coil domain). As to expression, widely expressed.

It localises to the lysosome membrane. Its function is as follows. As part of the BORC complex may play a role in lysosomes movement and localization at the cell periphery. Associated with the cytosolic face of lysosomes, the BORC complex may recruit ARL8B and couple lysosomes to microtubule plus-end-directed kinesin motor. May also be involved in the biogenesis of lysosome-related organelles such as melanosomes. The chain is KxDL motif-containing protein 1 (Kxd1) from Mus musculus (Mouse).